The chain runs to 445 residues: Bifunctional protein GlmU (445 aa).

The pyrophosphorylase stretch occupies residues 1–218 (MRALVLAAGK…LLEITGVNTR (218 aa)). UDP-N-acetyl-alpha-D-glucosamine-binding positions include 6 to 9 (LAAG), K20, Q69, 74 to 75 (GT), 96 to 98 (YGD), G134, E147, N162, and N216. D98 contacts Mg(2+). N216 provides a ligand contact to Mg(2+). The linker stretch occupies residues 219-239 (KTLVWLEEQLRMRKIEELLEN). Residues 240–445 (GVTILDPATT…GWVLKKRKEE (206 aa)) are N-acetyltransferase. 2 residues coordinate UDP-N-acetyl-alpha-D-glucosamine: R321 and K339. H351 (proton acceptor) is an active-site residue. Residues Y354 and N365 each coordinate UDP-N-acetyl-alpha-D-glucosamine. Residues A368, 374–375 (NY), S393, A411, and R428 each bind acetyl-CoA.

The protein in the N-terminal section; belongs to the N-acetylglucosamine-1-phosphate uridyltransferase family. This sequence in the C-terminal section; belongs to the transferase hexapeptide repeat family. In terms of assembly, homotrimer. Mg(2+) is required as a cofactor.

The protein resides in the cytoplasm. It catalyses the reaction alpha-D-glucosamine 1-phosphate + acetyl-CoA = N-acetyl-alpha-D-glucosamine 1-phosphate + CoA + H(+). It carries out the reaction N-acetyl-alpha-D-glucosamine 1-phosphate + UTP + H(+) = UDP-N-acetyl-alpha-D-glucosamine + diphosphate. It functions in the pathway nucleotide-sugar biosynthesis; UDP-N-acetyl-alpha-D-glucosamine biosynthesis; N-acetyl-alpha-D-glucosamine 1-phosphate from alpha-D-glucosamine 6-phosphate (route II): step 2/2. Its pathway is nucleotide-sugar biosynthesis; UDP-N-acetyl-alpha-D-glucosamine biosynthesis; UDP-N-acetyl-alpha-D-glucosamine from N-acetyl-alpha-D-glucosamine 1-phosphate: step 1/1. It participates in bacterial outer membrane biogenesis; LPS lipid A biosynthesis. Its function is as follows. Catalyzes the last two sequential reactions in the de novo biosynthetic pathway for UDP-N-acetylglucosamine (UDP-GlcNAc). The C-terminal domain catalyzes the transfer of acetyl group from acetyl coenzyme A to glucosamine-1-phosphate (GlcN-1-P) to produce N-acetylglucosamine-1-phosphate (GlcNAc-1-P), which is converted into UDP-GlcNAc by the transfer of uridine 5-monophosphate (from uridine 5-triphosphate), a reaction catalyzed by the N-terminal domain. The protein is Bifunctional protein GlmU of Thermotoga maritima (strain ATCC 43589 / DSM 3109 / JCM 10099 / NBRC 100826 / MSB8).